We begin with the raw amino-acid sequence, 214 residues long: MVSFKRYELPPLPYNYNALEPYIIEEIMKLHHQKHHNTYVKGANAALEKIEKHLKGEIQIDVRAVMRDFSFNYAGHIMHTIFWPNMAPPGKGGGTPGGRVADLIEKQFGGFEKFKALFSAAAKTVEGVGWGVLAFDPLTEELRILQVEKHNVLMTAGLVPILVIDVWEHAYYLQYKNDRGSYVENWWNVVNWDDVEKRLEQALNNAKPLYLLPQ.

Fe(3+) contacts are provided by His-31, His-79, Asp-165, and His-169. Residues His-31, His-79, Asp-165, and His-169 each coordinate Mn(2+).

This sequence belongs to the iron/manganese superoxide dismutase family. Mn(2+) is required as a cofactor. Fe(3+) serves as cofactor.

The enzyme catalyses 2 superoxide + 2 H(+) = H2O2 + O2. In terms of biological role, destroys superoxide anion radicals which are normally produced within the cells and which are toxic to biological systems. Catalyzes the dismutation of superoxide anion radicals into O2 and H2O2 by successive reduction and oxidation of the transition metal ion at the active site. The sequence is that of Superoxide dismutase [Mn/Fe] (sod) from Aeropyrum pernix (strain ATCC 700893 / DSM 11879 / JCM 9820 / NBRC 100138 / K1).